A 396-amino-acid chain; its full sequence is 1-deoxy-D-xylulose 5-phosphate reductoisomerase (396 aa).

6 residues coordinate NADPH: Thr10, Gly11, Ser12, Ile13, Asn38, and Asn123. Lys124 is a binding site for 1-deoxy-D-xylulose 5-phosphate. An NADPH-binding site is contributed by Glu125. Residue Asp149 coordinates Mn(2+). 1-deoxy-D-xylulose 5-phosphate contacts are provided by Ser150, Glu151, Ser185, and His208. Glu151 contributes to the Mn(2+) binding site. Gly214 is a binding site for NADPH. 1-deoxy-D-xylulose 5-phosphate contacts are provided by Ser221, Asn226, Lys227, and Glu230. Glu230 serves as a coordination point for Mn(2+).

It belongs to the DXR family. Requires Mg(2+) as cofactor. Mn(2+) serves as cofactor.

It catalyses the reaction 2-C-methyl-D-erythritol 4-phosphate + NADP(+) = 1-deoxy-D-xylulose 5-phosphate + NADPH + H(+). The protein operates within isoprenoid biosynthesis; isopentenyl diphosphate biosynthesis via DXP pathway; isopentenyl diphosphate from 1-deoxy-D-xylulose 5-phosphate: step 1/6. In terms of biological role, catalyzes the NADPH-dependent rearrangement and reduction of 1-deoxy-D-xylulose-5-phosphate (DXP) to 2-C-methyl-D-erythritol 4-phosphate (MEP). In Shewanella halifaxensis (strain HAW-EB4), this protein is 1-deoxy-D-xylulose 5-phosphate reductoisomerase.